The primary structure comprises 377 residues: Guanine nucleotide-binding protein subunit alpha-13 (377 aa).

S-palmitoyl cysteine attachment occurs at residues Cys-14 and Cys-18. One can recognise a G-alpha domain in the interval 47–377 (RLVKILLLGA…HDNLKQLMLQ (331 aa)). The G1 motif stretch occupies residues 50–63 (KILLLGAGESGKST). Residues 58 to 63 (ESGKST), Ser-173, and 197 to 200 (LLAR) each bind GTP. A Mg(2+)-binding site is contributed by Ser-62. Residues 195 to 203 (DILLARRPT) form a G2 motif region. Thr-203 is a Mg(2+) binding site. Phosphothreonine is present on Thr-203. Positions 218–227 (FKMVDVGGQR) are G3 motif. The interval 287–294 (ILFLNKTD) is G4 motif. GTP is bound by residues 291–294 (NKTD) and Ala-349. The G5 motif stretch occupies residues 347–352 (TTAINT).

This sequence belongs to the G-alpha family. G(12) subfamily. G proteins are composed of 3 units; alpha, beta and gamma. The alpha chain contains the guanine nucleotide binding site. Interacts with UBXD5. Interacts with HAX1. Interacts (in GTP-bound form) with PPP5C (via TPR repeats); activates PPP5C phosphatase activity and translocates PPP5C to the cell membrane. Interacts with RGS22. Interacts (in GTP-bound form) with ARHGEF1. Interacts (in GTP-bound form) with ARHGEF11 (via RGS domain). Interacts (in GTP-bound form) with ARHGEF12 (via RGS domain). Interacts with CTNND1. Interacts with GAS2L2. Interacts with GPR35. Interacts with GPR174. Post-translationally, phosphorylation on Thr-203 destabilizes the heterotrimer of alpha, beta and gamma, and inhibits Rho activation. As to expression, expressed in brain and testis, as well as in kidney and sperm (at protein level).

The protein resides in the membrane. The protein localises to the melanosome. It is found in the cytoplasm. Its subcellular location is the nucleus. Guanine nucleotide-binding proteins (G proteins) are involved as modulators or transducers in various transmembrane signaling systems. Activates effector molecule RhoA by binding and activating RhoGEFs (ARHGEF1/p115RhoGEF, ARHGEF11/PDZ-RhoGEF and ARHGEF12/LARG). GNA13-dependent Rho signaling subsequently regulates transcription factor AP-1 (activating protein-1). Promotes tumor cell invasion and metastasis by activating Rho/ROCK signaling pathway. Inhibits CDH1-mediated cell adhesion in a process independent from Rho activation. In lymphoid follicles, transmits P2RY8- and S1PR2-dependent signals that lead to inhibition of germinal center (GC) B cell growth and migration outside the GC niche. The protein is Guanine nucleotide-binding protein subunit alpha-13 (Gna13) of Mus musculus (Mouse).